Consider the following 82-residue polypeptide: Beta-insect toxin AaBTxL1 (82 aa).

The signal sequence occupies residues 1 to 22; it reads MMKLVLFSVIVILFSLIGSIHG. The 58-residue stretch at 25–82 folds into the LCN-type CS-alpha/beta domain; it reads VPGNYPLDRSGKKYPCTITWKKNPSCIQICKKHGVKYGYCFDFQCWCEIFGRLKTFKI. 3 cysteine pairs are disulfide-bonded: C40-C64, C50-C69, and C54-C71.

This sequence belongs to the long (3 C-C) scorpion toxin superfamily. Sodium channel inhibitor family. Beta subfamily. As to expression, expressed by the venom gland.

The protein localises to the secreted. Its function is as follows. Shifts the voltage of activation of para/tipE voltage-dependent sodium channels (Nav) toward more negative potentials. This chain is Beta-insect toxin AaBTxL1, found in Androctonus australis (Sahara scorpion).